The primary structure comprises 545 residues: Phospholipase B-like 1 (545 aa).

The N-terminal stretch at 1-35 is a signal peptide; sequence MSRHSQDERLGLPQPPALLPLLLLLLAVAVPLSQA. The N-linked (GlcNAc...) (high mannose) asparagine; alternate glycan is linked to Asn68. The N-linked (GlcNAc...) (hybrid) asparagine; alternate glycan is linked to Asn68. Positions 206–224 are cleaved as a propeptide — removed in mature form; that stretch reads LSPTKNSSLKFFKRWDMGH. Residues Asn305, Asn363, and Asn408 are each glycosylated (N-linked (GlcNAc...) (high mannose) asparagine; alternate). N-linked (GlcNAc...) (hybrid) asparagine; alternate glycosylation is found at Asn305, Asn363, and Asn408. 2 disulfide bridges follow: Cys467/Cys472 and Cys471/Cys486. The N-linked (GlcNAc...) (high mannose) asparagine; alternate glycan is linked to Asn523. A glycan (N-linked (GlcNAc...) (hybrid) asparagine; alternate) is linked at Asn523.

It belongs to the phospholipase B-like family. In terms of assembly, may form a homodimer, each monomer is composed of a chain A and a chain B. The maturation cleavages that produces chains A and B are required to open the putative substrate binding pocket. Both chains A and B remain associated in the mature protein.

It is found in the lysosome. Functionally, exhibits a weak phospholipase activity, acting on various phospholipids, including phosphatidylcholine, phosphatidylinositol, phosphatidylethanolamine and lysophospholipids. However, in view of the small size of the putative binding pocket, it has been proposed that it may act rather as an amidase or a peptidase. This Bos taurus (Bovine) protein is Phospholipase B-like 1 (PLBD1).